Consider the following 156-residue polypeptide: Transcription elongation factor GreA (156 aa).

Positions 6–75 (IYLTKEGYEK…ELENMLSKAE (70 aa)) form a coiled coil.

Belongs to the GreA/GreB family.

Necessary for efficient RNA polymerase transcription elongation past template-encoded arresting sites. The arresting sites in DNA have the property of trapping a certain fraction of elongating RNA polymerases that pass through, resulting in locked ternary complexes. Cleavage of the nascent transcript by cleavage factors such as GreA or GreB allows the resumption of elongation from the new 3'terminus. GreA releases sequences of 2 to 3 nucleotides. This Thermosipho africanus (strain TCF52B) protein is Transcription elongation factor GreA.